We begin with the raw amino-acid sequence, 308 residues long: Olfactory receptor 5H19 (308 aa).

Over 1 to 27 (MEKNATLLTEFVLTGLSHQPLWNIPLF) the chain is Extracellular. Asn-4 carries N-linked (GlcNAc...) asparagine glycosylation. A helical transmembrane segment spans residues 28–48 (LVFLVIYLITIVGNVSLITLI). Topologically, residues 49 to 55 (WTDPHLH) are cytoplasmic. Residues 56–76 (IPMYLFLGSLAFVDTSISSIV) traverse the membrane as a helical segment. Residues 77-92 (VPKMLLNFFGKSKVIT) lie on the Extracellular side of the membrane. The helical transmembrane segment at 93–113 (LSECMAQFFLFNISATTECFL) threads the bilayer. The cysteines at positions 96 and 188 are disulfide-linked. The Cytoplasmic segment spans residues 114–143 (LAAMAYDRYVAICKPLLYPVVMTNGLCVWL). A helical membrane pass occupies residues 144–164 (IALSFVAGIIHALIHEGFLLR). Topologically, residues 165–197 (LTFCNSNMIHNFYCDIISLLKISCTDTSLNYLI) are extracellular. Residues 198–218 (VFIFSGSIQVFTISTILVSYT) traverse the membrane as a helical segment. At 219–238 (IILFTILKKKSAKGIKKAFS) the chain is on the cytoplasmic side. A helical transmembrane segment spans residues 239-259 (TCGAHLLSVSLYYGPLLFMYV). The Extracellular portion of the chain corresponds to 260–270 (HPASSEVDDQD). A helical membrane pass occupies residues 271–291 (MIDSLFYTVIIPVLNPIIYSL). The Cytoplasmic segment spans residues 292–308 (RNKQVIDSLAKFLKRNV).

It belongs to the G-protein coupled receptor 1 family.

It is found in the cell membrane. Its function is as follows. Potential odorant receptor. The sequence is that of Olfactory receptor 5H19 from Mus musculus (Mouse).